The chain runs to 121 residues: Holo-[acyl-carrier-protein] synthase (121 aa).

Aspartate 8 and glutamate 58 together coordinate Mg(2+).

It belongs to the P-Pant transferase superfamily. AcpS family. Homotrimer. The cofactor is Mg(2+).

It localises to the cytoplasm. The catalysed reaction is apo-[ACP] + CoA = holo-[ACP] + adenosine 3',5'-bisphosphate + H(+). Transfers the 4'-phosphopantetheine moiety from coenzyme A to a Ser of fatty acid acyl-carrier-protein ACP. Also modifies the D-alanyl carrier protein but fails to recognize PCP and AcpK, an acyl carrier protein of secondary metabolism. This is Holo-[acyl-carrier-protein] synthase from Bacillus subtilis (strain 168).